The following is a 694-amino-acid chain: Putative L-type lectin-domain containing receptor kinase II.2 (694 aa).

The N-terminal stretch at 1–24 (MAGVLRSLRFWMIICVQVLSLVLA) is a signal peptide. At 25–318 (QDRDEFVYHD…PTSRSKDSKN (294 aa)) the chain is on the extracellular side. Residues 27 to 272 (RDEFVYHDFS…DQYILGWSFK (246 aa)) are legume-lectin like. 10 N-linked (GlcNAc...) asparagine glycosylation sites follow: N57, N58, N73, N131, N172, N183, N201, N208, N240, and N246. A disordered region spans residues 283–314 (SKILDPPNRPPPPSSPPPPPPPPPTPPTSRSK). A compositionally biased stretch (pro residues) spans 289–309 (PNRPPPPSSPPPPPPPPPTPP). The chain crosses the membrane as a helical span at residues 319-339 (IIIICVTVTSIAFLLMLGGFL). Residues 340–694 (YLYKKKKYAE…EDVTILFGGR (355 aa)) lie on the Cytoplasmic side of the membrane. Positions 375 to 650 (FRENRLLGAG…IQYLEGNATI (276 aa)) constitute a Protein kinase domain. Residues 381–389 (LGAGGFGKV) and K403 contribute to the ATP site. D500 (proton acceptor) is an active-site residue.

The protein in the C-terminal section; belongs to the protein kinase superfamily. Ser/Thr protein kinase family. This sequence in the N-terminal section; belongs to the leguminous lectin family.

The protein resides in the cell membrane. The enzyme catalyses L-seryl-[protein] + ATP = O-phospho-L-seryl-[protein] + ADP + H(+). The catalysed reaction is L-threonyl-[protein] + ATP = O-phospho-L-threonyl-[protein] + ADP + H(+). In Arabidopsis thaliana (Mouse-ear cress), this protein is Putative L-type lectin-domain containing receptor kinase II.2 (LECRK22).